Reading from the N-terminus, the 369-residue chain is 3-dehydroquinate synthase (369 aa).

Residues Asp-75–Lys-80, Gly-109–Asp-113, Thr-133–Thr-134, Lys-146, Lys-155, and Thr-173–Thr-176 contribute to the NAD(+) site. Residues Glu-188, His-251, and His-268 each coordinate Zn(2+).

It belongs to the sugar phosphate cyclases superfamily. Dehydroquinate synthase family. It depends on Co(2+) as a cofactor. Zn(2+) serves as cofactor. NAD(+) is required as a cofactor.

It localises to the cytoplasm. The enzyme catalyses 7-phospho-2-dehydro-3-deoxy-D-arabino-heptonate = 3-dehydroquinate + phosphate. It functions in the pathway metabolic intermediate biosynthesis; chorismate biosynthesis; chorismate from D-erythrose 4-phosphate and phosphoenolpyruvate: step 2/7. Its function is as follows. Catalyzes the conversion of 3-deoxy-D-arabino-heptulosonate 7-phosphate (DAHP) to dehydroquinate (DHQ). The protein is 3-dehydroquinate synthase of Legionella pneumophila (strain Corby).